The sequence spans 513 residues: Pleiotropic regulator 1 (513 aa).

Methionine 1 carries the N-acetylmethionine modification. The tract at residues 60-79 (TSKENLKEKGPQNATDSYPH) is disordered. The residue at position 119 (serine 119) is a Phosphoserine. Residues 136-160 (VDANRTGPAGSEYRHPGASDRSQPT) are disordered. Serine 200 is modified (phosphoserine). WD repeat units follow at residues 201–240 (GHLG…LKLS), 243–282 (GHIS…VIRH), 285–324 (GHLS…SVHT), 327–366 (GHTN…TRVT), 369–409 (NHKK…QNLS), 410–448 (GHNA…NFQR), and 459–498 (DSES…TEET). Serine 390 bears the Phosphoserine mark.

This sequence belongs to the WD repeat PRL1/PRL2 family. As to quaternary structure, identified in the spliceosome C complex. Component of the PRP19-CDC5L splicing complex composed of a core complex comprising a homotetramer of PRPF19, CDC5L, PLRG1 and BCAS2, and at least three less stably associated proteins CTNNBL1, CWC15 and HSPA8. Interacts (via its WD40 repeat domain) directly with CDC5L (via its C-terminal); the interaction is required for mRNA splicing but not for spliceosome assembly. Component of the minor spliceosome, which splices U12-type introns. Within this complex, interacts with CRIPT. Also interacts directly in the complex with BCAS2 and PRPF19. Interacts with USB1.

It is found in the nucleus. The protein localises to the nucleus speckle. In terms of biological role, involved in pre-mRNA splicing as component of the spliceosome. Component of the PRP19-CDC5L complex that forms an integral part of the spliceosome and is required for activating pre-mRNA splicing. As a component of the minor spliceosome, involved in the splicing of U12-type introns in pre-mRNAs. The chain is Pleiotropic regulator 1 (Plrg1) from Mus musculus (Mouse).